We begin with the raw amino-acid sequence, 874 residues long: Alanine--tRNA ligase (874 aa).

Zn(2+) is bound by residues His562, His566, Cys665, and His669.

It belongs to the class-II aminoacyl-tRNA synthetase family. Zn(2+) is required as a cofactor.

Its subcellular location is the cytoplasm. It carries out the reaction tRNA(Ala) + L-alanine + ATP = L-alanyl-tRNA(Ala) + AMP + diphosphate. Functionally, catalyzes the attachment of alanine to tRNA(Ala) in a two-step reaction: alanine is first activated by ATP to form Ala-AMP and then transferred to the acceptor end of tRNA(Ala). Also edits incorrectly charged Ser-tRNA(Ala) and Gly-tRNA(Ala) via its editing domain. This chain is Alanine--tRNA ligase, found in Pseudomonas putida (strain W619).